The following is a 340-amino-acid chain: Ketol-acid reductoisomerase (NADP(+)) (340 aa).

One can recognise a KARI N-terminal Rossmann domain in the interval 3–182 (VEMLYEADVK…GSARVGLLVT (180 aa)). NADP(+)-binding positions include 26–29 (YGSQ), R49, S53, and 83–86 (DEIQ). H108 is an active-site residue. G134 serves as a coordination point for NADP(+). The 146-residue stretch at 183-328 (TFKEETEEDL…AELRKAMPFV (146 aa)) folds into the KARI C-terminal knotted domain. Mg(2+) contacts are provided by D191, E195, E227, and E231. Residue S252 coordinates substrate.

The protein belongs to the ketol-acid reductoisomerase family. Mg(2+) serves as cofactor.

The catalysed reaction is (2R)-2,3-dihydroxy-3-methylbutanoate + NADP(+) = (2S)-2-acetolactate + NADPH + H(+). It catalyses the reaction (2R,3R)-2,3-dihydroxy-3-methylpentanoate + NADP(+) = (S)-2-ethyl-2-hydroxy-3-oxobutanoate + NADPH + H(+). The protein operates within amino-acid biosynthesis; L-isoleucine biosynthesis; L-isoleucine from 2-oxobutanoate: step 2/4. It participates in amino-acid biosynthesis; L-valine biosynthesis; L-valine from pyruvate: step 2/4. Its function is as follows. Involved in the biosynthesis of branched-chain amino acids (BCAA). Catalyzes an alkyl-migration followed by a ketol-acid reduction of (S)-2-acetolactate (S2AL) to yield (R)-2,3-dihydroxy-isovalerate. In the isomerase reaction, S2AL is rearranged via a Mg-dependent methyl migration to produce 3-hydroxy-3-methyl-2-ketobutyrate (HMKB). In the reductase reaction, this 2-ketoacid undergoes a metal-dependent reduction by NADPH to yield (R)-2,3-dihydroxy-isovalerate. This chain is Ketol-acid reductoisomerase (NADP(+)), found in Streptococcus mutans serotype c (strain ATCC 700610 / UA159).